The chain runs to 334 residues: UDP-N-acetylglucosamine 4,6-dehydratase (inverting) (334 aa).

NADP(+)-binding positions include 13–16, 37–42, 61–62, Ala-81, Lys-85, and 123–124; these read TGSF, SRDELK, DV, and LS. Lys-85 provides a ligand contact to substrate. Lys-127 is a catalytic residue. NADP(+) contacts are provided by Tyr-135 and Lys-139. Asn-167 provides a ligand contact to substrate. 168–172 provides a ligand contact to NADP(+); sequence VVGSR. Substrate is bound by residues Val-175, Thr-193, Arg-252, and Glu-255.

Belongs to the polysaccharide synthase family. In terms of assembly, homohexamer. It depends on NADP(+) as a cofactor.

It catalyses the reaction UDP-N-acetyl-alpha-D-glucosamine = UDP-2-acetamido-2,6-dideoxy-beta-L-arabino-hex-4-ulose + H2O. In terms of biological role, catalyzes the first step in the biosynthesis of pseudaminic acid, a sialic-acid-like sugar that is used to modify flagellin. Has both C6 dehydratase and C5 epimerase activities that result in the production of both UDP-2-acetamido-2,6-dideoxy-beta-L-arabino-4-hexulose and UDP-2-acetamido-2,6-dideoxy-alpha-D-xylo-4-hexulose. The chain is UDP-N-acetylglucosamine 4,6-dehydratase (inverting) (pseB) from Campylobacter jejuni subsp. jejuni serotype O:2 (strain ATCC 700819 / NCTC 11168).